The chain runs to 512 residues: Protein SHC1 (512 aa).

A compositionally biased stretch (acidic residues) spans Glu101–Ala113. Disordered regions lie at residues Glu101–Gln122 and Asp144–Ala164. Sel1-like repeat units follow at residues Pro318 to His353, Ile354 to His389, Pro390 to Ser429, and Cys433 to His470.

Belongs to the SKT5 family.

The protein localises to the cytoplasm. Its subcellular location is the cytoplasmic granule membrane. Functionally, required for the activation of chitin synthase III (CHS3) activity during the sporulation process. This is Protein SHC1 (SHC1) from Saccharomyces cerevisiae (strain ATCC 204508 / S288c) (Baker's yeast).